A 459-amino-acid chain; its full sequence is Glycosyl hydrolase family 109 protein (459 aa).

A signal peptide (tat-type signal) is located at residues 1-31; that stretch reads MHNIHRRNFLKAAGAATAGLVTANIALNAYA. NAD(+) is bound by residues 64–65, D86, 135–138, 155–156, and N184; these read ER, WEWH, and EV. Residues Y213, R232, 244 to 247, and Y326 each bind substrate; that span reads YPTH. Y244 is an NAD(+) binding site.

It belongs to the Gfo/Idh/MocA family. Glycosyl hydrolase 109 subfamily. The cofactor is NAD(+). Predicted to be exported by the Tat system. The position of the signal peptide cleavage has not been experimentally proven.

In terms of biological role, glycosidase. This chain is Glycosyl hydrolase family 109 protein, found in Shewanella baltica (strain OS195).